Reading from the N-terminus, the 883-residue chain is MPKLVIVESPTKARTIRNYLPKDYRVEASMGHVRDLPQSASDIPTELKGEKWSNLGVDVENNFAPLYIVPKDKKKIVKTLKDALKDADELILATDEDREGESISWHLLQLLQPRVPTKRMVFHEITQEAIQAALKNCRDVDQRLVHAQETRRILDRLVGYTLSPLLWKKIAWGLSAGRVQSVAVRLLVQRERARRAFRQGSYWDLKAQLTVEAGQFEAKLWTLAGQRLATGNDFDESTGQIIAGRQVCLLDQQEAEALRDRLQTQPWQVKSLEEKPTTRKPAPPFTTSTLQQESNRKLRLSARETMRVAQSLYERGFITYMRTDSVHLSQQAIEAARSCVEQMYGKNYLSPQPRQFTTKSKNAQEAHEAIRPAGNTFRLPQETGLSGAEFALYDLIWKRTIASQMAEARQTMLSVLLEVDNAEFRASGKRIDFPGFFRAYVEGSDDPDAALEDREILLPALKVGDRPTCQELAAIGHETQPPARYTEASLVKMLENEGIGRPSTYASIIGTIVDRGYAQLVSNTLTPTFTAFAVTALLEQHFPDLVDTSFSARMEQSLDDISNGEVDWLPYLSQFYRGDRGLEEQVKLRESEIDPAAARTVALEGLPAKVRIGRFGAYLEAEADGEPIKANLPKELTPADLDVQRVETLLRQKTEGPDQLGTHPETDEPIYLLTGAYGPYVQLGAATEEKPKPKRASLPKGMSLETISLEQAVGLLSLPRTLGEHPETGRRIQAGLGRFGPYVVCDLGGGEKDYRSLKADDDVLTIDLDRALELLAQPKKSRGRGKEPIREVGLHPDDQAPIQIFEGPYGLYLKHGKVNASLPEDEKPETISLETAVAALAAKAGQAKAKGGRRSTGTPKSGETKARTTKTTKKTTTRRTTSR.

In terms of domain architecture, Toprim spans 2–126 (PKLVIVESPT…TKRMVFHEIT (125 aa)). 2 residues coordinate Mg(2+): glutamate 8 and aspartate 95. A Topo IA-type catalytic domain is found at 141–583 (DQRLVHAQET…QFYRGDRGLE (443 aa)). The tract at residues 175-180 (SAGRVQ) is interaction with DNA. The interval 271–294 (SLEEKPTTRKPAPPFTTSTLQQES) is disordered. Tyrosine 320 functions as the O-(5'-phospho-DNA)-tyrosine intermediate in the catalytic mechanism. The disordered stretch occupies residues 842 to 883 (AKAGQAKAKGGRRSTGTPKSGETKARTTKTTKKTTTRRTTSR). Over residues 867–883 (RTTKTTKKTTTRRTTSR) the composition is skewed to basic residues.

Belongs to the type IA topoisomerase family. As to quaternary structure, monomer. The cofactor is Mg(2+).

The enzyme catalyses ATP-independent breakage of single-stranded DNA, followed by passage and rejoining.. In terms of biological role, releases the supercoiling and torsional tension of DNA, which is introduced during the DNA replication and transcription, by transiently cleaving and rejoining one strand of the DNA duplex. Introduces a single-strand break via transesterification at a target site in duplex DNA. The scissile phosphodiester is attacked by the catalytic tyrosine of the enzyme, resulting in the formation of a DNA-(5'-phosphotyrosyl)-enzyme intermediate and the expulsion of a 3'-OH DNA strand. The free DNA strand then undergoes passage around the unbroken strand, thus removing DNA supercoils. Finally, in the religation step, the DNA 3'-OH attacks the covalent intermediate to expel the active-site tyrosine and restore the DNA phosphodiester backbone. The protein is DNA topoisomerase 1 of Synechococcus elongatus (strain ATCC 33912 / PCC 7942 / FACHB-805) (Anacystis nidulans R2).